A 98-amino-acid chain; its full sequence is Small ribosomal subunit protein uS19 (98 aa).

It belongs to the universal ribosomal protein uS19 family.

Protein S19 forms a complex with S13 that binds strongly to the 16S ribosomal RNA. This is Small ribosomal subunit protein uS19 from Chlorobaculum parvum (strain DSM 263 / NCIMB 8327) (Chlorobium vibrioforme subsp. thiosulfatophilum).